The primary structure comprises 105 residues: Large ribosomal subunit protein uL24 (105 aa).

This sequence belongs to the universal ribosomal protein uL24 family. In terms of assembly, part of the 50S ribosomal subunit.

In terms of biological role, one of two assembly initiator proteins, it binds directly to the 5'-end of the 23S rRNA, where it nucleates assembly of the 50S subunit. Functionally, one of the proteins that surrounds the polypeptide exit tunnel on the outside of the subunit. This is Large ribosomal subunit protein uL24 from Sphingopyxis alaskensis (strain DSM 13593 / LMG 18877 / RB2256) (Sphingomonas alaskensis).